The following is a 115-amino-acid chain: Chorion protein S15 (115 aa).

The first 18 residues, 1–18, serve as a signal peptide directing secretion; the sequence is MKYLIVCVTLALFAYINA.

It belongs to the chorion protein S15/S18 family.

The protein resides in the secreted. Functionally, chorion membrane (egg shell) protein; plays a role in protecting the egg from the environment. In Drosophila melanogaster (Fruit fly), this protein is Chorion protein S15 (Cp15).